Here is a 452-residue protein sequence, read N- to C-terminus: Phosphoglucosamine mutase (452 aa).

The active-site Phosphoserine intermediate is the serine 103. The Mg(2+) site is built by serine 103, aspartate 244, aspartate 246, and aspartate 248. Serine 103 bears the Phosphoserine mark.

Belongs to the phosphohexose mutase family. Requires Mg(2+) as cofactor. In terms of processing, activated by phosphorylation.

The catalysed reaction is alpha-D-glucosamine 1-phosphate = D-glucosamine 6-phosphate. Catalyzes the conversion of glucosamine-6-phosphate to glucosamine-1-phosphate. In Rhodospirillum rubrum (strain ATCC 11170 / ATH 1.1.1 / DSM 467 / LMG 4362 / NCIMB 8255 / S1), this protein is Phosphoglucosamine mutase.